The sequence spans 339 residues: Methylcobamide:CoM methyltransferase MtbA (339 aa).

Residues His-239, Cys-241, and Cys-316 each contribute to the Zn(2+) site.

The protein belongs to the uroporphyrinogen decarboxylase family. MtbA/MtaA subfamily. The cofactor is Zn(2+).

The catalysed reaction is methyl-Co(III)-[methylamine-specific corrinoid protein] + coenzyme M = Co(I)-[methylamine-specific corrinoid protein] + methyl-coenzyme M + H(+). Its pathway is one-carbon metabolism; methanogenesis from methylated amine. Functionally, methyltransferase involved in methanogenesis from methylamines methanol pathway. Catalyzes the transfer of the methyl group from the methylated corrinoid protein MtmC (MtmC1 or MtmC2) to coenzyme M, forming the substrate for coenzyme-B sulfoethylthiotransferase. The polypeptide is Methylcobamide:CoM methyltransferase MtbA (mtbA) (Methanosarcina mazei (strain ATCC BAA-159 / DSM 3647 / Goe1 / Go1 / JCM 11833 / OCM 88) (Methanosarcina frisia)).